A 229-amino-acid chain; its full sequence is Ribonuclease 3 (229 aa).

An RNase III domain is found at 5-127 (LSRLERQLGY…LIGAIYLDAG (123 aa)). Mg(2+) is bound at residue Glu-40. Asp-44 is a catalytic residue. Mg(2+) contacts are provided by Asp-113 and Glu-116. Residue Glu-116 is part of the active site. The 71-residue stretch at 154–224 (DPKTRLQEFL…AAAALIALGV (71 aa)) folds into the DRBM domain.

Belongs to the ribonuclease III family. In terms of assembly, homodimer. The cofactor is Mg(2+).

Its subcellular location is the cytoplasm. The enzyme catalyses Endonucleolytic cleavage to 5'-phosphomonoester.. Its function is as follows. Digests double-stranded RNA. Involved in the processing of primary rRNA transcript to yield the immediate precursors to the large and small rRNAs (23S and 16S). Processes some mRNAs, and tRNAs when they are encoded in the rRNA operon. Processes pre-crRNA and tracrRNA of type II CRISPR loci if present in the organism. This chain is Ribonuclease 3, found in Pseudomonas fluorescens (strain Pf0-1).